The primary structure comprises 663 residues: Transmembrane 9 superfamily member 2 (663 aa).

A signal peptide spans 1-28 (MSARLPVLSPPRWPRLLLLSLLLLGAVP). Over 29–300 (GPRRSGGFYL…LESMPHTHIQ (272 aa)) the chain is Lumenal. Residues 301 to 321 (WFSIMNSLVIVLFLSGMVAMI) traverse the membrane as a helical segment. Topologically, residues 322–374 (MLRTLHKDIARYNQMDSTEDAQEEFGWKLVHGDIFRPPRKGMLLSVFLGSGTQ) are cytoplasmic. A helical transmembrane segment spans residues 375-395 (ILIMTFVTLFFACLGFLSPAN). Topologically, residues 396 to 398 (RGA) are lumenal. The helical transmembrane segment at 399-419 (LMTCAVVLWVLLGTPAGYVAA) threads the bilayer. At 420–437 (RFYKSFGGEKWKTNVLLT) the chain is on the cytoplasmic side. A helical membrane pass occupies residues 438-458 (SFLCPGIVFADFFIMNLILWG). At 459–466 (EGSSAAIP) the chain is on the lumenal side. The helical transmembrane segment at 467–487 (FGTLVAILALWFCISVPLTFI) threads the bilayer. Topologically, residues 488–522 (GAYFGFKKNAIEHPVRTNQIPRQIPEQSFYTKPLP) are cytoplasmic. A helical membrane pass occupies residues 523–543 (GIIMGGILPFGCIFIQLFFIL). At 544-554 (NSIWSHQMYYM) the chain is on the lumenal side. A helical membrane pass occupies residues 555–575 (FGFLFLVFIILVITCSEATIL). Residues 576–591 (LCYFHLCAEDYHWQWR) lie on the Cytoplasmic side of the membrane. A helical transmembrane segment spans residues 592 to 612 (SFLTSGFTAVYFLIYAVHYFF). Residues 613-631 (SKLQITGTASTILYFGYTM) are Lumenal-facing. Residues 632 to 652 (IMVLIFFLFTGTIGFFACFWF) traverse the membrane as a helical segment. The Cytoplasmic segment spans residues 653-663 (VTKIYSVVKVD).

It belongs to the nonaspanin (TM9SF) (TC 9.A.2) family.

It is found in the endosome membrane. It localises to the golgi outpost. Its subcellular location is the cytoplasm. The protein resides in the cytoskeleton. The protein localises to the microtubule organizing center. In the intracellular compartments, may function as a channel or small molecule transporter. The polypeptide is Transmembrane 9 superfamily member 2 (TM9SF2) (Pongo abelii (Sumatran orangutan)).